The chain runs to 985 residues: Probable beta-galactosidase C (985 aa).

The first 23 residues, 1–23, serve as a signal peptide directing secretion; it reads MRILSLLFLLLLGFLAGNRVVSA. Tyr82, Asn127, Ala128, Glu129, and Asn187 together coordinate substrate. Glu188 acts as the Proton donor in catalysis. Tyr251 provides a ligand contact to substrate. Residues Cys257 and Cys304 are joined by a disulfide bond. A glycan (N-linked (GlcNAc...) asparagine) is linked at Asn276. Glu287 functions as the Nucleophile in the catalytic mechanism. Tyr353 serves as a coordination point for substrate. Asn391, Asn434, Asn517, Asn602, Asn677, Asn715, Asn720, and Asn759 each carry an N-linked (GlcNAc...) asparagine glycan.

This sequence belongs to the glycosyl hydrolase 35 family.

It localises to the secreted. It catalyses the reaction Hydrolysis of terminal non-reducing beta-D-galactose residues in beta-D-galactosides.. Cleaves beta-linked terminal galactosyl residues from gangliosides, glycoproteins, and glycosaminoglycans. This is Probable beta-galactosidase C (lacC) from Aspergillus clavatus (strain ATCC 1007 / CBS 513.65 / DSM 816 / NCTC 3887 / NRRL 1 / QM 1276 / 107).